A 522-amino-acid chain; its full sequence is Peptide chain release factor 3 (522 aa).

Positions 10-277 constitute a tr-type G domain; it reads ASRKTFAIIS…TFVDFAPAPS (268 aa). Residues 19–26, 87–91, and 141–144 contribute to the GTP site; these read SHPDAGKT, DTPGH, and NKMD.

This sequence belongs to the TRAFAC class translation factor GTPase superfamily. Classic translation factor GTPase family. PrfC subfamily.

The protein resides in the cytoplasm. Functionally, increases the formation of ribosomal termination complexes and stimulates activities of RF-1 and RF-2. It binds guanine nucleotides and has strong preference for UGA stop codons. It may interact directly with the ribosome. The stimulation of RF-1 and RF-2 is significantly reduced by GTP and GDP, but not by GMP. This chain is Peptide chain release factor 3, found in Listeria monocytogenes serovar 1/2a (strain ATCC BAA-679 / EGD-e).